We begin with the raw amino-acid sequence, 160 residues long: CXXC motif containing zinc binding protein (160 aa).

The Zn(2+) site is built by Cys33, Cys36, Cys67, and Cys70. Ser75 carries the phosphoserine modification.

The protein belongs to the UPF0587 family. As to quaternary structure, monomer.

The sequence is that of CXXC motif containing zinc binding protein (Czib) from Mus musculus (Mouse).